Here is a 101-residue protein sequence, read N- to C-terminus: Small ribosomal subunit protein uS14 (101 aa).

Positions 1 to 25 are disordered; the sequence is MAKVSAIQKNKSRQKKSQRLHNKRS. Residues 10–25 are compositionally biased toward basic residues; that stretch reads NKSRQKKSQRLHNKRS.

The protein belongs to the universal ribosomal protein uS14 family. Part of the 30S ribosomal subunit. Contacts proteins S3 and S10.

In terms of biological role, binds 16S rRNA, required for the assembly of 30S particles and may also be responsible for determining the conformation of the 16S rRNA at the A site. This is Small ribosomal subunit protein uS14 from Rickettsia typhi (strain ATCC VR-144 / Wilmington).